The primary structure comprises 150 residues: Linear element protein rec25 (150 aa).

At serine 11 the chain carries Phosphoserine.

As to quaternary structure, component of linear elements (LinEs), which are similar to synaptonemal complexes, at least composed of rec27, rec25, rec10 and mug20. Interacts with rec10; the interaction is direct.

Its subcellular location is the cytoplasm. The protein localises to the nucleus. The protein resides in the chromosome. During meiotic DNA recombination, binds to and may help activate DNA double-strand break (DSB) hotspot sites. In Schizosaccharomyces pombe (strain 972 / ATCC 24843) (Fission yeast), this protein is Linear element protein rec25.